Consider the following 99-residue polypeptide: uncharacterized protein (99 aa).

A TM2 domain is found at 32-79 (KKSVGIAVLLSFIIPGAGQMYLGRVGKGIILLLTCWLIIPWIYSIYDA). The next 2 membrane-spanning stretches (helical) occupy residues 34–54 (SVGI…MYLG) and 56–76 (VGKG…IYSI).

The protein resides in the cell membrane. This is an uncharacterized protein from Methanocaldococcus jannaschii (strain ATCC 43067 / DSM 2661 / JAL-1 / JCM 10045 / NBRC 100440) (Methanococcus jannaschii).